The chain runs to 76 residues: Sulfur carrier protein TusA (76 aa).

The active-site Cysteine persulfide intermediate is Cys14.

Belongs to the sulfur carrier protein TusA family. Interacts with IscS.

It is found in the cytoplasm. The protein operates within tRNA modification. Sulfur carrier protein involved in sulfur trafficking in the cell. Part of a sulfur-relay system required for 2-thiolation during synthesis of 2-thiouridine of the modified wobble base 5-methylaminomethyl-2-thiouridine (mnm(5)s(2)U) in tRNA. Interacts with IscS and stimulates its cysteine desulfurase activity. Accepts an activated sulfur from IscS, which is then transferred to TusD, and thus determines the direction of sulfur flow from IscS to 2-thiouridine formation. Also appears to be involved in sulfur transfer for the biosynthesis of molybdopterin. This chain is Sulfur carrier protein TusA, found in Buchnera aphidicola subsp. Acyrthosiphon pisum (strain Tuc7).